The sequence spans 163 residues: Lipoprotein signal peptidase (163 aa).

3 helical membrane-spanning segments follow: residues 7–27, 64–84, and 99–119; these read LSFLWLSAVAFVIDLLTKYLV, WQKYFFIALALIISAVLVYLL, and ALIIGGALANMADRAYHGFVV. Catalysis depends on residues Asp-120 and Asp-138. Residues 133–153 traverse the membrane as a helical segment; that stretch reads VFNVADIAICVGVGLLILDSF.

Belongs to the peptidase A8 family.

Its subcellular location is the cell inner membrane. The enzyme catalyses Release of signal peptides from bacterial membrane prolipoproteins. Hydrolyzes -Xaa-Yaa-Zaa-|-(S,diacylglyceryl)Cys-, in which Xaa is hydrophobic (preferably Leu), and Yaa (Ala or Ser) and Zaa (Gly or Ala) have small, neutral side chains.. Its pathway is protein modification; lipoprotein biosynthesis (signal peptide cleavage). Its function is as follows. This protein specifically catalyzes the removal of signal peptides from prolipoproteins. The polypeptide is Lipoprotein signal peptidase (Actinobacillus succinogenes (strain ATCC 55618 / DSM 22257 / CCUG 43843 / 130Z)).